The primary structure comprises 693 residues: Golgin subfamily A member 6C (693 aa).

Disordered stretches follow at residues 20–71, 497–547, and 629–693; these read NKLA…DSQY, LPGE…GTEQ, and NPAD…MQDT. A coiled-coil region spans residues 73–611; it reads ELAVALESSS…KLLELQELVL (539 aa). A compositionally biased stretch (basic and acidic residues) spans 537–547; the sequence is LPKEKADGTEQ. The span at 679–693 shows a compositional bias: polar residues; sequence PVQQIVQLSPVMQDT.

Belongs to the GOLGA6 family.

This is Golgin subfamily A member 6C (GOLGA6C) from Homo sapiens (Human).